A 590-amino-acid chain; its full sequence is MATIGRRAYAEMFGPTVGDRLRLADTGLILEVEADYTLRAGSYGEEVKFGGGKTIRDGMAQAQHSRAQGAVDTVLTNALIMDAAGIVKADIGLRDGRIAAIGKAGNPDTQAGVDIIIGPGTEVISCEGQIVTAGGIDSHIHFICPQQIEHALASGVTTMLGGGTGPATGTLATTCTPGPWNIERMLQAADAFAVNLGFLGKGNASLPGALHEQIDAGAIGLKLHEDWGSTPAAISNCLDVAEATDTQVALHSDTLNESGFVENTIAAVGGRGICAFHTEGAGGGHAPDILRVVGEANFLPSSTNPTMPYTHNTLDEHVDMLMVCHHLDASIAEDLAFAESRIRKETIAAEDILHDLGAISMMSSDSQAMGRVGEVILRTWQTAHKMKQQRGWLSPPAAGQGAGLSSAAGQGVDHDTRNDNFRIKRYLAKYTINPAIAHGISHEVGSIAVGKWADIVLWKPAFFGVKPALILKGGQIALAAMGDPNASIPTPQPVHYRPMFGAFGGAIAKTSLTFVSQAGLQAGIGQRYGLRKTLSAVRGIRGIRKRDMVHNSYLPQMEIDAQTYMVRADGQWLSCEPATELPLAQRYFLF.

In terms of domain architecture, Urease spans 134–590 (GGIDSHIHFI…LPLAQRYFLF (457 aa)). Positions 139, 141, and 222 each coordinate Ni(2+). K222 is subject to N6-carboxylysine. H224 provides a ligand contact to substrate. H251 and H277 together coordinate Ni(2+). H325 functions as the Proton donor in the catalytic mechanism. D365 is a Ni(2+) binding site. Positions 388 to 416 (QQRGWLSPPAAGQGAGLSSAAGQGVDHDT) are disordered. Residues 393 to 411 (LSPPAAGQGAGLSSAAGQG) are compositionally biased toward low complexity.

This sequence belongs to the metallo-dependent hydrolases superfamily. Urease alpha subunit family. Heterotrimer of UreA (gamma), UreB (beta) and UreC (alpha) subunits. Three heterotrimers associate to form the active enzyme. It depends on Ni cation as a cofactor. Carboxylation allows a single lysine to coordinate two nickel ions.

It is found in the cytoplasm. The enzyme catalyses urea + 2 H2O + H(+) = hydrogencarbonate + 2 NH4(+). The protein operates within nitrogen metabolism; urea degradation; CO(2) and NH(3) from urea (urease route): step 1/1. The chain is Urease subunit alpha from Verminephrobacter eiseniae (strain EF01-2).